The primary structure comprises 145 residues: D-aminoacyl-tRNA deacylase (145 aa).

Positions 137 to 138 (GP) match the Gly-cisPro motif, important for rejection of L-amino acids motif.

It belongs to the DTD family. In terms of assembly, homodimer.

It is found in the cytoplasm. It catalyses the reaction glycyl-tRNA(Ala) + H2O = tRNA(Ala) + glycine + H(+). It carries out the reaction a D-aminoacyl-tRNA + H2O = a tRNA + a D-alpha-amino acid + H(+). An aminoacyl-tRNA editing enzyme that deacylates mischarged D-aminoacyl-tRNAs. Also deacylates mischarged glycyl-tRNA(Ala), protecting cells against glycine mischarging by AlaRS. Acts via tRNA-based rather than protein-based catalysis; rejects L-amino acids rather than detecting D-amino acids in the active site. By recycling D-aminoacyl-tRNA to D-amino acids and free tRNA molecules, this enzyme counteracts the toxicity associated with the formation of D-aminoacyl-tRNA entities in vivo and helps enforce protein L-homochirality. The polypeptide is D-aminoacyl-tRNA deacylase (Lactobacillus acidophilus (strain ATCC 700396 / NCK56 / N2 / NCFM)).